Reading from the N-terminus, the 700-residue chain is MYLVSLLSSCCLLVLLGTLPARAAHEDPVEKVIEGFSRGLSNAEREVGKALEGINNGITQAGREVEKIFGELSNMGSQAGKNVEHGLDKVAHDINNGIGHAGKEAEKFAHGVNHAAGQVGKETNKIIHHGVSQGGSEAGKFGQGSHHAFGQGGNVANKLGHETHHAFGQGGNVAHKLGHETHHAFGQGGNVADKLGHGGNVADKLGHGTHHAFGQGGNVADKLGHETHHAFGQGGNVADKLGHGTHHAFGQGGNVADKLGHETHHAFGQGGNVAEKLGHETHHAFGQGGNMADKFGQGAHHAFGQGGNMADKFGQGAHHAFGQGGNMADKFGQGAHHAFGQGGNMADKFGQGAHHAFGQGGNMADKFGQGAHHAFGQGGNMADKFGQGAHHAFGQGRDMAETFDQGAHHAFGQGGREGGRLVQGAGQGLSHAAKEAQQFGHGHGHGYYAAGQTWQEGDKVIHPGVSQAGEEMEQFGQGVRHTIKQAEKEAEKVAHGVQNGVNQAQKEAEKVAHGVQNGVNQAQKEAEKVAHGVQNGVNQAQKEAEKVAHGVQTGVNQAGKETQRVGQGVQTGFNQGQKEAEKVAHGVQTGVNQAGKETQKAGQGVNYAAGQAEKEAEKLGQGVHHAAGQEMNRLQQDVHNGVNQPSKEANQLLNGSHQGQGGYGGQHGGAATTTVVSGASVNKPFINFPALWRSIAATMP.

The signal sequence occupies residues 1–23 (MYLVSLLSSCCLLVLLGTLPARA). 3 disordered regions span residues 133–158 (QGGS…VANK), 183–258 (HAFG…VADK), and 283–391 (HAFG…GAHH). Positions 488-546 (KEAEKVAHGVQNGVNQAQKEAEKVAHGVQNGVNQAQKEAEKVAHGVQNGVNQAQKEAEK) form a coiled coil. The segment covering 641-654 (GVNQPSKEANQLLN) has biased composition (polar residues). Positions 641–669 (GVNQPSKEANQLLNGSHQGQGGYGGQHGG) are disordered. Gly residues predominate over residues 658–668 (QGQGGYGGQHG).

As to expression, detected in epidermis, in suprabasal keratinocytes. Detected in suprabasal layers of embryonic epidermis and in stratified layers of embryonic tongue and palate. Detected in adult stomach.

It localises to the secreted. This chain is Suprabasin (Sbsn), found in Mus musculus (Mouse).